Here is a 485-residue protein sequence, read N- to C-terminus: Cytosol non-specific dipeptidase (485 aa).

His-76 provides a ligand contact to Zn(2+). Asp-78 is an active-site residue. Asp-115 provides a ligand contact to Zn(2+). Glu-145 functions as the Proton acceptor in the catalytic mechanism. Glu-146 and Asp-169 together coordinate Zn(2+). Lys-296 is modified (N6-acetyllysine). His-457 serves as a coordination point for Zn(2+).

It belongs to the peptidase M20C family. Zn(2+) serves as cofactor. The cofactor is Co(2+).

It carries out the reaction Hydrolysis of dipeptides, preferentially hydrophobic dipeptides including prolyl amino acids.. Its activity is regulated as follows. Inhibited by metal chelators. Its function is as follows. Dipeptidase with broad substrate specificity. Requires dipeptide substrates with an unblocked N-terminus and the amino group in the alpha or beta position. Non-protein amino acids and proline are not accepted in the C-terminal position, whereas some dipeptide amides and formyl amino acids are hydrolyzed. Also shows cysteinylglycinase activity, which is sufficient for E.coli to utilize cysteinylglycine as a cysteine source. In Escherichia coli (strain K12), this protein is Cytosol non-specific dipeptidase (pepD).